Reading from the N-terminus, the 200-residue chain is 3-isopropylmalate dehydratase small subunit (200 aa).

It belongs to the LeuD family. LeuD type 1 subfamily. In terms of assembly, heterodimer of LeuC and LeuD.

It carries out the reaction (2R,3S)-3-isopropylmalate = (2S)-2-isopropylmalate. It participates in amino-acid biosynthesis; L-leucine biosynthesis; L-leucine from 3-methyl-2-oxobutanoate: step 2/4. In terms of biological role, catalyzes the isomerization between 2-isopropylmalate and 3-isopropylmalate, via the formation of 2-isopropylmaleate. In Campylobacter jejuni subsp. jejuni serotype O:23/36 (strain 81-176), this protein is 3-isopropylmalate dehydratase small subunit.